A 109-amino-acid chain; its full sequence is Aquaporin-2 (109 aa).

At 1-6 (SIAFSR) the chain is on the cytoplasmic side. A helical membrane pass occupies residues 7-27 (AVFSEFLATLLFVFFGLGSAL). Residues 28 to 35 (NWPQALPS) are Extracellular-facing. The chain crosses the membrane as a helical span at residues 36–54 (VLQIAMAFGLAIGTLVQAL). The Cytoplasmic portion of the chain corresponds to 55 to 59 (GHISG). The segment at residues 60 to 69 (AHINPAVTVA) is an intramembrane region (discontinuously helical). Positions 63 to 65 (NPA) match the NPA 1 motif. Residues 70–80 (CLVGCHVSFLR) are Cytoplasmic-facing. The helical transmembrane segment at 81–102 (ATFYLAAQLLGAVAGAAILHEI) threads the bilayer. The Extracellular segment spans residues 103 to 109 (TPPDIRG).

The protein belongs to the MIP/aquaporin (TC 1.A.8) family. In terms of assembly, homotetramer. Post-translationally, serine phosphorylation is necessary and sufficient for expression at the apical membrane. Endocytosis is not phosphorylation-dependent. In terms of processing, N-glycosylated.

Its subcellular location is the apical cell membrane. The protein resides in the basolateral cell membrane. It localises to the cell membrane. It is found in the cytoplasmic vesicle membrane. The protein localises to the golgi apparatus. Its subcellular location is the trans-Golgi network membrane. The enzyme catalyses H2O(in) = H2O(out). It catalyses the reaction glycerol(in) = glycerol(out). In terms of biological role, forms a water-specific channel that provides the plasma membranes of renal collecting duct with high permeability to water, thereby permitting water to move in the direction of an osmotic gradient. Plays an essential role in renal water homeostasis. Could also be permeable to glycerol. This chain is Aquaporin-2, found in Dugong dugon (Dugong).